Here is a 218-residue protein sequence, read N- to C-terminus: Protein THO1 (218 aa).

An SAP domain is found at 4 to 38 (YSSLTVVQLKDLLTKRNLSVGGLKNELVQRLIKDD). A Phosphoserine modification is found at serine 22. 2 disordered regions span residues 37-123 (DDEE…LSPE) and 177-218 (LVSR…GYRR). Residues 47–57 (VSPQEQNQEQG) show a composition bias toward polar residues. 2 positions are modified to phosphoserine: serine 58 and serine 68. Basic and acidic residues predominate over residues 72-96 (TEKKEVSSEPKETNEPKEENKDVQK). 2 stretches are compositionally biased toward low complexity: residues 102–122 (SATA…ALSP) and 186–203 (SGNN…NNRS). Residues 204-218 (RVSKNRRGNRSGYRR) show a composition bias toward basic residues.

It belongs to the SAP domain-containing ribonucleoprotein family. In terms of assembly, interacts with SUB2 in the presence of RNA; this interaction facilitates RNA binding of SUB2.

In terms of biological role, facilitates RNA binding of SUB2 and likely plays a role in mRNA export. Suppressor of the transcriptional defect of HPR1 by overexpression. This chain is Protein THO1 (THO1), found in Saccharomyces cerevisiae (strain ATCC 204508 / S288c) (Baker's yeast).